We begin with the raw amino-acid sequence, 396 residues long: 3-amino-4-hydroxybenzoate 2-monooxygenase PtnB3 (396 aa).

FAD contacts are provided by residues Ala-19, 38–39 (EQ), and Arg-112. The active-site Proton acceptor is Tyr-217. Position 295 (Asp-295) interacts with FAD.

It belongs to the 6-hydroxynicotinate 3-monooxygenase family. Requires FAD as cofactor.

The enzyme catalyses 3-amino-4-hydroxybenzoate + NADPH + O2 + H(+) = 3-amino-2,4-dihydroxybenzoate + NADP(+) + H2O. It functions in the pathway antibiotic biosynthesis. Functionally, part of a gene cluster involved in the biosynthesis of thioplatencin (ThioPTN) and platencin (PTN), potent and selective inhibitors of bacterial and mammalian fatty acid synthases. Catalyzes the hydroxylation of 3-amino-4-hydroxybenzoate (3,4-AHBA) to 3-amino-2,4-dihydroxybenzoate (3,2,4-ADHBA). The chain is 3-amino-4-hydroxybenzoate 2-monooxygenase PtnB3 from Streptomyces platensis.